Reading from the N-terminus, the 697-residue chain is MSSSHTVTVSMDVEAGQKNKDKKGISQDLILAYKTLGVVFGGLVTSPLYVYPSMNLTNPTEEDYLGIYSIMFWTLTLIGVVKYICIALNADDHGEGGTFAMYSLLCQHANIGILPSKKIYTEEENLISNQPVVAGRPGRLRRFIESSIIARRLLLLTAILGMCMLIGDGILTPAISVLSAIDGLRGPFPSVSKPAVEGLSAAILVGLFLLQKYGTSKVSFMFSPIMAAWTFATPVIGVYSIWRYYPGIFKAMSPHYIVRFFMTNQTRGWQLLGGTVLCITGAEAMFADLGHFSKRSIQIAFMSSIYPSLVLTYAGQTAYLINNVDDFSDGFYKFVPRPVYWPMFIIATLAAIVASQSLISATFSVIKQSVVLDYFPRVKVVHTSKDKEGEVYSPETNYMLMLLCVGVILGFGDGKDIGNAFGVVVILVMLITTILLTLVMLIIWGTHVVLVALYLVPFLLLEATYVSAVCTKILRGGWVPFAVSVALAAVMFGWYYGRQRKTEYEAANKVTLERLGELLSGPGLRRVPGLCFFYSNRQDGGWLTPVLAHYIRNMRSLHEVTVFLTLRYLLVAKVDGKDRVQAVRRLGPAGVYGCTIQYGYADAIDFEEDDIAGQVVGALRERVVDGEEEGERVEAARAAGVVHVRGKMRFHVGKDTRLFDRVLLGFYELLHGACRSALPALGIPLQQRVEIGMLYKA.

Residues 1 to 29 (MSSSHTVTVSMDVEAGQKNKDKKGISQDL) lie on the Cytoplasmic side of the membrane. The chain crosses the membrane as a helical span at residues 30 to 50 (ILAYKTLGVVFGGLVTSPLYV). Topologically, residues 51–66 (YPSMNLTNPTEEDYLG) are extracellular. Residue Asn55 is glycosylated (N-linked (GlcNAc...) asparagine). The helical transmembrane segment at 67 to 87 (IYSIMFWTLTLIGVVKYICIA) threads the bilayer. Over 88–152 (LNADDHGEGG…FIESSIIARR (65 aa)) the chain is Cytoplasmic. The chain crosses the membrane as a helical span at residues 153–173 (LLLLTAILGMCMLIGDGILTP). The Extracellular segment spans residues 174 to 189 (AISVLSAIDGLRGPFP). A helical transmembrane segment spans residues 190–210 (SVSKPAVEGLSAAILVGLFLL). Over 211 to 217 (QKYGTSK) the chain is Cytoplasmic. A helical membrane pass occupies residues 218-238 (VSFMFSPIMAAWTFATPVIGV). Over 239 to 271 (YSIWRYYPGIFKAMSPHYIVRFFMTNQTRGWQL) the chain is Extracellular. A glycan (N-linked (GlcNAc...) asparagine) is linked at Asn264. A helical transmembrane segment spans residues 272 to 292 (LGGTVLCITGAEAMFADLGHF). Over 293–300 (SKRSIQIA) the chain is Cytoplasmic. Residues 301–321 (FMSSIYPSLVLTYAGQTAYLI) form a helical membrane-spanning segment. Over 322–338 (NNVDDFSDGFYKFVPRP) the chain is Extracellular. Residues 339–359 (VYWPMFIIATLAAIVASQSLI) form a helical membrane-spanning segment. At 360 to 390 (SATFSVIKQSVVLDYFPRVKVVHTSKDKEGE) the chain is on the cytoplasmic side. Residues 391 to 411 (VYSPETNYMLMLLCVGVILGF) traverse the membrane as a helical segment. Topologically, residues 412–422 (GDGKDIGNAFG) are extracellular. The chain crosses the membrane as a helical span at residues 423 to 443 (VVVILVMLITTILLTLVMLII). Residues 444 to 447 (WGTH) lie on the Cytoplasmic side of the membrane. Residues 448–468 (VVLVALYLVPFLLLEATYVSA) form a helical membrane-spanning segment. Over 469–475 (VCTKILR) the chain is Extracellular. A helical membrane pass occupies residues 476–496 (GGWVPFAVSVALAAVMFGWYY). The Cytoplasmic portion of the chain corresponds to 497–697 (GRQRKTEYEA…RVEIGMLYKA (201 aa)).

This sequence belongs to the HAK/KUP transporter (TC 2.A.72.3) family.

It localises to the membrane. Functionally, high-affinity potassium transporter. This is Probable potassium transporter 4 (HAK4) from Oryza sativa subsp. japonica (Rice).